The following is a 260-amino-acid chain: Imidazole glycerol phosphate synthase subunit HisF (260 aa).

Catalysis depends on residues Asp11 and Asp130.

The protein belongs to the HisA/HisF family. As to quaternary structure, heterodimer of HisH and HisF.

Its subcellular location is the cytoplasm. The catalysed reaction is 5-[(5-phospho-1-deoxy-D-ribulos-1-ylimino)methylamino]-1-(5-phospho-beta-D-ribosyl)imidazole-4-carboxamide + L-glutamine = D-erythro-1-(imidazol-4-yl)glycerol 3-phosphate + 5-amino-1-(5-phospho-beta-D-ribosyl)imidazole-4-carboxamide + L-glutamate + H(+). It participates in amino-acid biosynthesis; L-histidine biosynthesis; L-histidine from 5-phospho-alpha-D-ribose 1-diphosphate: step 5/9. Its function is as follows. IGPS catalyzes the conversion of PRFAR and glutamine to IGP, AICAR and glutamate. The HisF subunit catalyzes the cyclization activity that produces IGP and AICAR from PRFAR using the ammonia provided by the HisH subunit. The chain is Imidazole glycerol phosphate synthase subunit HisF from Endomicrobium trichonymphae.